We begin with the raw amino-acid sequence, 527 residues long: Tyrosine-protein kinase TXK (527 aa).

A disordered region spans residues 35–79; it reads DEELPEKYTQRRRPWLSQLSNKKQSNTGRVQPSKRKPLPPLPPSE. The segment covering 51–64 has biased composition (polar residues); the sequence is SQLSNKKQSNTGRV. The Nuclear localization signal signature appears at 68 to 73; sequence KRKPLP. Residues 82-142 form the SH3 domain; that stretch reads EEKIQVKALY…PSNYVTENKI (61 aa). A Phosphotyrosine; by autocatalysis modification is found at Tyr-91. The SH2 domain occupies 150-246; it reads WYHRNITRNQ…GLMTRLRYPV (97 aa). A Protein kinase domain is found at 271–527; it reads LAFIKEIGSG…RAVTEIAETW (257 aa). Residues 277 to 285 and Lys-299 contribute to the ATP site; that span reads IGSGQFGVV. Asp-390 acts as the Proton acceptor in catalysis. Phosphotyrosine; by FYN and autocatalysis is present on Tyr-420.

Belongs to the protein kinase superfamily. Tyr protein kinase family. TEC subfamily. Interacts with PARP1 and EEF1A1. Interacts with SH2D2A. Interacts with FYN. In terms of processing, phosphorylated at Tyr-420 by FYN. Autophosphorylation at Tyr-91 is critical for the activation of TXK, leading to the up-regulation of IFN-gamma gene transcription. Post-translationally, the cysteine string at the N-terminus is palmitoylated and required for the proper subcellular location. As to expression, expressed in T-cells and some myeloid cell lines. Expressed in Th1/Th0 cells with IFN-gamma-producing potential.

The protein resides in the cytoplasm. It is found in the nucleus. Its subcellular location is the cell membrane. The catalysed reaction is L-tyrosyl-[protein] + ATP = O-phospho-L-tyrosyl-[protein] + ADP + H(+). Its activity is regulated as follows. Activated by phosphorylation by FYN. Its function is as follows. Non-receptor tyrosine kinase that plays a redundant role with ITK in regulation of the adaptive immune response. Regulates the development, function and differentiation of conventional T-cells and nonconventional NKT-cells. When antigen presenting cells (APC) activate T-cell receptor (TCR), a series of phosphorylation leads to the recruitment of TXK to the cell membrane, where it is phosphorylated at Tyr-420. Phosphorylation leads to TXK full activation. Also contributes to signaling from many receptors and participates in multiple downstream pathways, including regulation of the actin cytoskeleton. Like ITK, can phosphorylate PLCG1, leading to its localization in lipid rafts and activation, followed by subsequent cleavage of its substrates. In turn, the endoplasmic reticulum releases calcium in the cytoplasm and the nuclear activator of activated T-cells (NFAT) translocates into the nucleus to perform its transcriptional duty. Plays a role in the positive regulation of IFNG transcription in T-helper 1 cells as part of an IFNG promoter-binding complex with PARP1 and EEF1A1. Within the complex, phosphorylates both PARP1 and EEF1A1. Also phosphorylates key sites in LCP2 leading to the up-regulation of Th1 preferred cytokine IL-2. Phosphorylates 'Tyr-201' of CTLA4 which leads to the association of PI-3 kinase with the CTLA4 receptor. The sequence is that of Tyrosine-protein kinase TXK (TXK) from Homo sapiens (Human).